We begin with the raw amino-acid sequence, 316 residues long: Pantothenate kinase (316 aa).

95-102 contributes to the ATP binding site; the sequence is GSVAVGKS.

It belongs to the prokaryotic pantothenate kinase family.

The protein localises to the cytoplasm. The enzyme catalyses (R)-pantothenate + ATP = (R)-4'-phosphopantothenate + ADP + H(+). The protein operates within cofactor biosynthesis; coenzyme A biosynthesis; CoA from (R)-pantothenate: step 1/5. This chain is Pantothenate kinase, found in Shewanella sp. (strain MR-7).